We begin with the raw amino-acid sequence, 144 residues long: Large ribosomal subunit protein uL13 (144 aa).

It belongs to the universal ribosomal protein uL13 family. As to quaternary structure, part of the 50S ribosomal subunit.

In terms of biological role, this protein is one of the early assembly proteins of the 50S ribosomal subunit, although it is not seen to bind rRNA by itself. It is important during the early stages of 50S assembly. The chain is Large ribosomal subunit protein uL13 from Nitratidesulfovibrio vulgaris (strain DSM 19637 / Miyazaki F) (Desulfovibrio vulgaris).